A 197-amino-acid chain; its full sequence is ATP-dependent Clp protease proteolytic subunit (197 aa).

Ser98 functions as the Nucleophile in the catalytic mechanism. His123 is a catalytic residue.

Belongs to the peptidase S14 family. As to quaternary structure, fourteen ClpP subunits assemble into 2 heptameric rings which stack back to back to give a disk-like structure with a central cavity, resembling the structure of eukaryotic proteasomes.

The protein resides in the cytoplasm. The catalysed reaction is Hydrolysis of proteins to small peptides in the presence of ATP and magnesium. alpha-casein is the usual test substrate. In the absence of ATP, only oligopeptides shorter than five residues are hydrolyzed (such as succinyl-Leu-Tyr-|-NHMec, and Leu-Tyr-Leu-|-Tyr-Trp, in which cleavage of the -Tyr-|-Leu- and -Tyr-|-Trp bonds also occurs).. Its function is as follows. Cleaves peptides in various proteins in a process that requires ATP hydrolysis. Has a chymotrypsin-like activity. Plays a major role in the degradation of misfolded proteins. The protein is ATP-dependent Clp protease proteolytic subunit of Ligilactobacillus salivarius (strain UCC118) (Lactobacillus salivarius).